The chain runs to 371 residues: uncharacterized protein (371 aa).

The region spanning 43 to 148 (DESRVPKFYL…VQAFPTASNP (106 aa)) is the EH domain. A disordered region spans residues 179 to 205 (SMRKKKESDSKEVSAHNSPAKGAAHDL).

This is an uncharacterized protein from Caenorhabditis elegans.